The primary structure comprises 678 residues: Methionine--tRNA ligase (678 aa).

Positions 14–24 match the 'HIGH' region motif; it reads PYANGSIHLGH. 4 residues coordinate Zn(2+): cysteine 145, cysteine 148, cysteine 158, and cysteine 161. A 'KMSKS' region motif is present at residues 331–335; it reads KMSKS. Lysine 334 provides a ligand contact to ATP. The tRNA-binding domain occupies 576–678; that stretch reads AFAAVDLRIA…SGAKPGQRVK (103 aa).

The protein belongs to the class-I aminoacyl-tRNA synthetase family. MetG type 1 subfamily. Homodimer. Zn(2+) is required as a cofactor.

The protein resides in the cytoplasm. It catalyses the reaction tRNA(Met) + L-methionine + ATP = L-methionyl-tRNA(Met) + AMP + diphosphate. Functionally, is required not only for elongation of protein synthesis but also for the initiation of all mRNA translation through initiator tRNA(fMet) aminoacylation. The polypeptide is Methionine--tRNA ligase (Pseudomonas aeruginosa (strain UCBPP-PA14)).